The chain runs to 479 residues: GTPase Obg (479 aa).

In terms of domain architecture, Obg spans 2–159; the sequence is PRFVDRVVIH…RDLTLELKTV (158 aa). The OBG-type G domain maps to 160-340; sequence ADVGLVGFPS…LIFGLWQMVS (181 aa). GTP is bound by residues 166–173, 191–195, 212–215, 292–295, and 321–323; these read GFPSAGKS, FTTLV, DVPG, NKID, and STV. Positions 173 and 193 each coordinate Mg(2+). The OCT domain maps to 358 to 436; the sequence is PVPVDDSGFD…IGEMTFDWEP (79 aa). A disordered region spans residues 438 to 479; sequence TPAGGHVAMSGRGTDVRLERSDRVGAAERKAARRQRRERDDD. The span at 451-467 shows a compositional bias: basic and acidic residues; that stretch reads TDVRLERSDRVGAAERK.

Belongs to the TRAFAC class OBG-HflX-like GTPase superfamily. OBG GTPase family. In terms of assembly, monomer. Mg(2+) is required as a cofactor.

Its subcellular location is the cytoplasm. Functionally, an essential GTPase which binds GTP, GDP and possibly (p)ppGpp with moderate affinity, with high nucleotide exchange rates and a fairly low GTP hydrolysis rate. Plays a role in control of the cell cycle, stress response, ribosome biogenesis and in those bacteria that undergo differentiation, in morphogenesis control. The protein is GTPase Obg of Mycobacterium ulcerans (strain Agy99).